The following is a 157-amino-acid chain: Endoribonuclease YbeY (157 aa).

Positions 114, 118, and 124 each coordinate Zn(2+).

The protein belongs to the endoribonuclease YbeY family. It depends on Zn(2+) as a cofactor.

It is found in the cytoplasm. Single strand-specific metallo-endoribonuclease involved in late-stage 70S ribosome quality control and in maturation of the 3' terminus of the 16S rRNA. The protein is Endoribonuclease YbeY of Yersinia pseudotuberculosis serotype O:1b (strain IP 31758).